Reading from the N-terminus, the 404-residue chain is Probable RNA polymerase sigma-C factor (404 aa).

Positions 193–206 match the Polymerase core binding motif; sequence DLIQEGTLGLERAV. The H-T-H motif DNA-binding region spans 362-381; the sequence is LSEIGRILNLSRERVRQIEA.

It belongs to the sigma-70 factor family.

Its function is as follows. Sigma factors are initiation factors that promote the attachment of RNA polymerase to specific initiation sites and are then released. The protein is Probable RNA polymerase sigma-C factor (sigC) of Synechocystis sp. (strain ATCC 27184 / PCC 6803 / Kazusa).